The following is a 375-amino-acid chain: Esterase AN6793 (375 aa).

The tract at residues 138–158 (RHPQPGLDPGHGHRHKRMPPL) is disordered.

It belongs to the sidJ hydrolase family. As to quaternary structure, homodimer.

It participates in secondary metabolite biosynthesis. Esterase; part of a cluster that mediates the biosynthesis of a yet undetermined secondary metabolite. With the HR-PKS AN6791, produces a pathway intermediate compound with molecular weight 258. The polypeptide is Esterase AN6793 (Emericella nidulans (strain FGSC A4 / ATCC 38163 / CBS 112.46 / NRRL 194 / M139) (Aspergillus nidulans)).